A 424-amino-acid polypeptide reads, in one-letter code: Light-independent protochlorophyllide reductase subunit N (424 aa).

[4Fe-4S] cluster is bound by residues C27, C52, and C113.

It belongs to the BchN/ChlN family. As to quaternary structure, protochlorophyllide reductase is composed of three subunits; BchL, BchN and BchB. Forms a heterotetramer of two BchB and two BchN subunits. It depends on [4Fe-4S] cluster as a cofactor.

It carries out the reaction chlorophyllide a + oxidized 2[4Fe-4S]-[ferredoxin] + 2 ADP + 2 phosphate = protochlorophyllide a + reduced 2[4Fe-4S]-[ferredoxin] + 2 ATP + 2 H2O. It participates in porphyrin-containing compound metabolism; bacteriochlorophyll biosynthesis (light-independent). Its function is as follows. Component of the dark-operative protochlorophyllide reductase (DPOR) that uses Mg-ATP and reduced ferredoxin to reduce ring D of protochlorophyllide (Pchlide) to form chlorophyllide a (Chlide). This reaction is light-independent. The NB-protein (BchN-BchB) is the catalytic component of the complex. This chain is Light-independent protochlorophyllide reductase subunit N, found in Halorhodospira halophila (strain DSM 244 / SL1) (Ectothiorhodospira halophila (strain DSM 244 / SL1)).